Here is a 7481-residue protein sequence, read N- to C-terminus: Polyketide synthase GfsA (7481 aa).

The interval alanine 24–leucine 1020 is loading module (LM). One can recognise a Ketosynthase family 3 (KS3) 1 domain in the interval aspartate 26–alanine 451. The tract at residues arginine 60–alanine 80 is disordered. The For decarboxylation activity of LM role is filled by glutamine 197. Serine 662 (for acyltransferase activity of LM) is an active-site residue. In terms of domain architecture, Carrier 1 spans proline 945–leucine 1020. Serine 980 carries the O-(pantetheine 4'-phosphoryl)serine modification. Residues aspartate 1038 to glutamine 1454 form the Ketosynthase family 3 (KS3) 2 domain. 4 module regions span residues aspartate 1038–leucine 2517, glutamate 2538–isoleucine 4063, aspartate 4084–valine 5636, and aspartate 5655–leucine 7400. Active-site for beta-ketoacyl synthase 1 activity residues include cysteine 1201, histidine 1336, and histidine 1376. A Carrier 2 domain is found at arginine 2442–leucine 2517. Position 2477 is an O-(pantetheine 4'-phosphoryl)serine (serine 2477). The region spanning glutamate 2538–glutamate 2964 is the Ketosynthase family 3 (KS3) 3 domain. Active-site for beta-ketoacyl synthase 2 activity residues include cysteine 2711, histidine 2846, and histidine 2886. The Carrier 3 domain maps to glutamine 3988–isoleucine 4063. Serine 4023 carries the post-translational modification O-(pantetheine 4'-phosphoryl)serine. The Ketosynthase family 3 (KS3) 4 domain maps to aspartate 4084–glutamine 4514. Active-site for beta-ketoacyl synthase 3 activity residues include cysteine 4261, histidine 4396, and histidine 4436. In terms of domain architecture, Carrier 4 spans threonine 5561–valine 5636. Serine 5596 carries the O-(pantetheine 4'-phosphoryl)serine modification. The Ketosynthase family 3 (KS3) 5 domain maps to aspartate 5655–glutamine 6081. Active-site for beta-ketoacyl synthase 4 activity residues include cysteine 5828, histidine 5963, and histidine 6003. The tract at residues histidine 6561–valine 6685 is N-terminal hotdog fold. One can recognise a PKS/mFAS DH domain in the interval histidine 6561–alanine 6841. The Proton acceptor; for dehydratase activity role is filled by histidine 6593. The interval alanine 6700–alanine 6841 is C-terminal hotdog fold. Aspartate 6761 (proton donor; for dehydratase activity) is an active-site residue. Positions glutamine 7325–leucine 7400 constitute a Carrier 5 domain. An O-(pantetheine 4'-phosphoryl)serine modification is found at serine 7360.

As to quaternary structure, homodimer. The loading module (LM, residues 13-926) dimerizes. LM cross-links to its cognate acyl-carrier domain in a manner that seems physiological; mutation of residues in the 2 domains alters reactions efficiency in a manner predicted by the cross-linked crystal. Pantetheine 4'-phosphate serves as cofactor.

The protein operates within antibiotic biosynthesis. Its function is as follows. First protein in the synthesis of the 16-membered macrolide antibiotics FD-891 and FD-892. Composed of 5 modules; the first is a loading module (LM) that synthesizes a starter unit used by the first elongation module for polyketide chain elongation. The starter unit is extended by multiple rounds of addition of malonyl-CoA or methylmalonyl-CoA, and other modifications to help generate the final products. The loading module (residues 1-927, LM with an inactive acyltransferase domain) preferentially decarboxylates malonyl-GfsA acyl carrier protein of the LM (ACP-LM) over methylmalonyl-GfsA ACP-LM and has no activity on malonyl-CoA or methymalonyl-CoA. LM decarboxylates malonyl-ACP-LM better than the malonyl-ACP-1 module of GfsA (i.e. the next module in the same protein) and has no activity on other malonyl-ACP modules. This is Polyketide synthase GfsA from Streptomyces halstedii.